Reading from the N-terminus, the 250-residue chain is tRNA (guanine-N(1)-)-methyltransferase (250 aa).

Residues G112 and 132-137 (IGDFVL) contribute to the S-adenosyl-L-methionine site.

Belongs to the RNA methyltransferase TrmD family. In terms of assembly, homodimer.

The protein localises to the cytoplasm. It carries out the reaction guanosine(37) in tRNA + S-adenosyl-L-methionine = N(1)-methylguanosine(37) in tRNA + S-adenosyl-L-homocysteine + H(+). Its function is as follows. Specifically methylates guanosine-37 in various tRNAs. The chain is tRNA (guanine-N(1)-)-methyltransferase from Marinomonas sp. (strain MWYL1).